The chain runs to 516 residues: Cytochrome P450 1A2 (516 aa).

S69 is a glycosylation site (O-linked (GlcNAc) serine). Residue F226 coordinates substrate. Heme is bound at residue C458.

This sequence belongs to the cytochrome P450 family. As to quaternary structure, interacts with PGRMC1; the interaction requires PGRMC1 homodimerization. It depends on heme as a cofactor. In terms of tissue distribution, liver.

It localises to the endoplasmic reticulum membrane. Its subcellular location is the microsome membrane. The enzyme catalyses an organic molecule + reduced [NADPH--hemoprotein reductase] + O2 = an alcohol + oxidized [NADPH--hemoprotein reductase] + H2O + H(+). It catalyses the reaction 17beta-estradiol + reduced [NADPH--hemoprotein reductase] + O2 = 2-hydroxy-17beta-estradiol + oxidized [NADPH--hemoprotein reductase] + H2O + H(+). The catalysed reaction is 17beta-estradiol + reduced [NADPH--hemoprotein reductase] + O2 = 4-hydroxy-17beta-estradiol + oxidized [NADPH--hemoprotein reductase] + H2O + H(+). It carries out the reaction estrone + reduced [NADPH--hemoprotein reductase] + O2 = 2-hydroxyestrone + oxidized [NADPH--hemoprotein reductase] + H2O + H(+). The enzyme catalyses estrone + reduced [NADPH--hemoprotein reductase] + O2 = 4-hydroxyestrone + oxidized [NADPH--hemoprotein reductase] + H2O + H(+). It catalyses the reaction cholesterol + reduced [NADPH--hemoprotein reductase] + O2 = 25-hydroxycholesterol + oxidized [NADPH--hemoprotein reductase] + H2O + H(+). The catalysed reaction is all-trans-retinol + reduced [NADPH--hemoprotein reductase] + O2 = all-trans-retinal + oxidized [NADPH--hemoprotein reductase] + 2 H2O + H(+). It carries out the reaction all-trans-retinal + reduced [NADPH--hemoprotein reductase] + O2 = all-trans-retinoate + oxidized [NADPH--hemoprotein reductase] + H2O + 2 H(+). The enzyme catalyses (5Z,8Z,11Z,14Z)-eicosatetraenoate + reduced [NADPH--hemoprotein reductase] + O2 = (14R,15S)-epoxy-(5Z,8Z,11Z)-eicosatrienoate + oxidized [NADPH--hemoprotein reductase] + H2O + H(+). It catalyses the reaction (5Z,8Z,11Z,14Z)-eicosatetraenoate + reduced [NADPH--hemoprotein reductase] + O2 = (14S,15R)-epoxy-(5Z,8Z,11Z)-eicosatrienoate + oxidized [NADPH--hemoprotein reductase] + H2O + H(+). The catalysed reaction is (5Z,8Z,11Z,14Z,17Z)-eicosapentaenoate + reduced [NADPH--hemoprotein reductase] + O2 = (17R,18S)-epoxy-(5Z,8Z,11Z,14Z)-eicosatetraenoate + oxidized [NADPH--hemoprotein reductase] + H2O + H(+). It carries out the reaction (4Z,7Z,10Z,13Z,16Z,19Z)-docosahexaenoate + reduced [NADPH--hemoprotein reductase] + O2 = (19R,20S)-epoxy-(4Z,7Z,10Z,13Z,16Z)-docosapentaenoate + oxidized [NADPH--hemoprotein reductase] + H2O + H(+). The enzyme catalyses (5S)-hydroperoxy-(6E,8Z,11Z,14Z)-eicosatetraenoate = 5-oxo-(6E,8Z,11Z,14Z)-eicosatetraenoate + H2O. It catalyses the reaction (12S)-hydroperoxy-(5Z,8Z,10E,14Z)-eicosatetraenoate = 12-oxo-(5Z,8Z,10E,14Z)-eicosatetraenoate + H2O. The catalysed reaction is (15S)-hydroperoxy-(5Z,8Z,11Z,13E)-eicosatetraenoate = 15-oxo-(5Z,8Z,11Z,13E)-eicosatetraenoate + H2O. It carries out the reaction (13S)-hydroperoxy-(9Z,11E)-octadecadienoate = 13-oxo-(9Z,11E)-octadecadienoate + H2O. The enzyme catalyses (5Z,8Z,11Z,14Z)-eicosatetraenoate + reduced [NADPH--hemoprotein reductase] + O2 = 13-hydroxy-(5Z,8Z,11Z,14Z)-eicosatetraenoate + oxidized [NADPH--hemoprotein reductase] + H2O + H(+). It catalyses the reaction (5Z,8Z,11Z,14Z)-eicosatetraenoate + reduced [NADPH--hemoprotein reductase] + O2 = 19-hydroxy-(5Z,8Z,11Z,14Z)-eicosatetraenoate + oxidized [NADPH--hemoprotein reductase] + H2O + H(+). The catalysed reaction is (9Z,12Z)-octadecadienoate + reduced [NADPH--hemoprotein reductase] + O2 = 11-hydroxy-(9Z,12Z)-octadecadienoate + oxidized [NADPH--hemoprotein reductase] + H2O + H(+). It functions in the pathway cofactor metabolism; retinol metabolism. It participates in steroid metabolism; cholesterol metabolism. Its pathway is lipid metabolism; arachidonate metabolism. A cytochrome P450 monooxygenase involved in the metabolism of various endogenous substrates, including fatty acids, steroid hormones and vitamins. Mechanistically, uses molecular oxygen inserting one oxygen atom into a substrate, and reducing the second into a water molecule, with two electrons provided by NADPH via cytochrome P450 reductase (NADPH--hemoprotein reductase). Catalyzes the hydroxylation of carbon-hydrogen bonds. Exhibits high catalytic activity for the formation of hydroxyestrogens from estrone (E1) and 17beta-estradiol (E2), namely 2-hydroxy E1 and E2. Metabolizes cholesterol toward 25-hydroxycholesterol, a physiological regulator of cellular cholesterol homeostasis. May act as a major enzyme for all-trans retinoic acid biosynthesis in the liver. Catalyzes two successive oxidative transformation of all-trans retinol to all-trans retinal and then to the active form all-trans retinoic acid. Primarily catalyzes stereoselective epoxidation of the last double bond of polyunsaturated fatty acids (PUFA), displaying a strong preference for the (R,S) stereoisomer. Catalyzes bisallylic hydroxylation and omega-1 hydroxylation of PUFA. May also participate in eicosanoids metabolism by converting hydroperoxide species into oxo metabolites (lipoxygenase-like reaction, NADPH-independent). Plays a role in the oxidative metabolism of xenobiotics. Catalyzes the N-hydroxylation of heterocyclic amines and the O-deethylation of phenacetin. Metabolizes caffeine via N3-demethylation. The polypeptide is Cytochrome P450 1A2 (Homo sapiens (Human)).